A 206-amino-acid polypeptide reads, in one-letter code: Nucleoside triphosphate pyrophosphatase (206 aa).

The active-site Proton acceptor is the Asp-76.

It belongs to the Maf family. A divalent metal cation is required as a cofactor.

Its subcellular location is the cytoplasm. It carries out the reaction a ribonucleoside 5'-triphosphate + H2O = a ribonucleoside 5'-phosphate + diphosphate + H(+). It catalyses the reaction a 2'-deoxyribonucleoside 5'-triphosphate + H2O = a 2'-deoxyribonucleoside 5'-phosphate + diphosphate + H(+). Its function is as follows. Nucleoside triphosphate pyrophosphatase. May have a dual role in cell division arrest and in preventing the incorporation of modified nucleotides into cellular nucleic acids. The chain is Nucleoside triphosphate pyrophosphatase from Streptomyces avermitilis (strain ATCC 31267 / DSM 46492 / JCM 5070 / NBRC 14893 / NCIMB 12804 / NRRL 8165 / MA-4680).